We begin with the raw amino-acid sequence, 236 residues long: Phosphoribosylaminoimidazole-succinocarboxamide synthase (236 aa).

Belongs to the SAICAR synthetase family.

The enzyme catalyses 5-amino-1-(5-phospho-D-ribosyl)imidazole-4-carboxylate + L-aspartate + ATP = (2S)-2-[5-amino-1-(5-phospho-beta-D-ribosyl)imidazole-4-carboxamido]succinate + ADP + phosphate + 2 H(+). It functions in the pathway purine metabolism; IMP biosynthesis via de novo pathway; 5-amino-1-(5-phospho-D-ribosyl)imidazole-4-carboxamide from 5-amino-1-(5-phospho-D-ribosyl)imidazole-4-carboxylate: step 1/2. This chain is Phosphoribosylaminoimidazole-succinocarboxamide synthase, found in Pseudomonas syringae pv. tomato (strain ATCC BAA-871 / DC3000).